Reading from the N-terminus, the 459-residue chain is Transmembrane protein 143 (459 aa).

2 helical membrane passes run 280-300 and 301-321; these read LLNL…GMVV and LTDL…FMGL. Ser-332 carries the phosphoserine modification. Positions 435–459 are disordered; it reads GFPKLDPVAPITSEPPQATPSSNIS. The segment covering 448 to 459 has biased composition (polar residues); the sequence is EPPQATPSSNIS.

It localises to the membrane. This chain is Transmembrane protein 143 (TMEM143), found in Homo sapiens (Human).